The sequence spans 272 residues: MNFFESLDTAAWRNQSRLCVGLDPEPARMPDCLPKDAEGIYTFCAAIMDATVDLVCAYKPNVAFFEAHGAAGWSALERLVKRRPGPPLILDAKRGDIGSTAEAYARSVFTTLGADAVTLSPYLGSDALEPFLRHADRGCFILCKTSNPGSGDLQDARLADGRPLYLAVAEMARDCWNMRGNVGLVVGATHPAALADIRRACPDMLILAPGVGAQGGDLEATVRAAAAGDDPRLIVNVSRTVLYADRGANFAAAARTAARQLRDAINAALRAV.

The active-site Proton donor is the Lys93.

The protein belongs to the OMP decarboxylase family. Type 2 subfamily.

The enzyme catalyses orotidine 5'-phosphate + H(+) = UMP + CO2. It participates in pyrimidine metabolism; UMP biosynthesis via de novo pathway; UMP from orotate: step 2/2. This is Orotidine 5'-phosphate decarboxylase from Roseiflexus castenholzii (strain DSM 13941 / HLO8).